We begin with the raw amino-acid sequence, 309 residues long: Early nodulin-75 (309 aa).

The first 25 residues, 1–25, serve as a signal peptide directing secretion; sequence MTSVLHYSLLLLLLGVVILTTPVLA. Residues 56 to 67 show a composition bias toward pro residues; it reads PPPVHHPPPEYQ. The interval 56 to 309 is disordered; that stretch reads PPPVHHPPPE…YGRYPPSKKN (254 aa). Basic and acidic residues-rich tracts occupy residues 81 to 210 and 219 to 247; these read PHEK…EKPP and KPPH…HEKP. Composition is skewed to pro residues over residues 248–276 and 283–302; these read PPVY…VYPP and IYEP…PYGR.

Belongs to the nodulin 75 family.

Functionally, involved in early stages of root nodule development. In Glycine max (Soybean), this protein is Early nodulin-75 (ENOD2A).